A 624-amino-acid chain; its full sequence is Threonine--tRNA ligase (624 aa).

The tract at residues 1-143 is editing domain; sequence MRLLFIHADE…SRTVTPEAAE (143 aa). The catalytic stretch occupies residues 197–499; the sequence is AHVKLMREKE…EQEGKLPTLP (303 aa). Positions 289, 340, and 467 each coordinate Zn(2+). The segment at 598–624 is disordered; it reads LERETEGKPRVPLTIPDRLSRRPRFGR.

This sequence belongs to the class-II aminoacyl-tRNA synthetase family. Homodimer. It depends on Zn(2+) as a cofactor.

It is found in the cytoplasm. The catalysed reaction is tRNA(Thr) + L-threonine + ATP = L-threonyl-tRNA(Thr) + AMP + diphosphate + H(+). Functionally, catalyzes the attachment of threonine to tRNA(Thr) in a two-step reaction: L-threonine is first activated by ATP to form Thr-AMP and then transferred to the acceptor end of tRNA(Thr). Also edits incorrectly charged L-seryl-tRNA(Thr). The protein is Threonine--tRNA ligase of Methanopyrus kandleri (strain AV19 / DSM 6324 / JCM 9639 / NBRC 100938).